A 202-amino-acid chain; its full sequence is LexA repressor (202 aa).

Residues 28-48 (RAEIAQRLGFRSPNAAEEHLK) constitute a DNA-binding region (H-T-H motif). Residues Ser-119 and Lys-156 each act as for autocatalytic cleavage activity in the active site.

It belongs to the peptidase S24 family. Homodimer.

The catalysed reaction is Hydrolysis of Ala-|-Gly bond in repressor LexA.. In terms of biological role, represses a number of genes involved in the response to DNA damage (SOS response), including recA and lexA. Binds to the 16 bp palindromic sequence 5'-CTGTATATATATACAG-3'. In the presence of single-stranded DNA, RecA interacts with LexA causing an autocatalytic cleavage which disrupts the DNA-binding part of LexA, leading to derepression of the SOS regulon and eventually DNA repair. The protein is LexA repressor of Citrobacter koseri (strain ATCC BAA-895 / CDC 4225-83 / SGSC4696).